A 149-amino-acid chain; its full sequence is Ribose-5-phosphate isomerase B (149 aa).

A D-ribulose 5-phosphate-binding site is contributed by D9–H10. The active-site Proton acceptor is the C66. Residue G67–G71 coordinates D-ribulose 5-phosphate. The active-site Proton donor is the H99. N100, R110, R133, and R137 together coordinate D-ribulose 5-phosphate.

Belongs to the LacAB/RpiB family. In terms of assembly, homodimer, and homotetramer.

It catalyses the reaction aldehydo-D-ribose 5-phosphate = D-ribulose 5-phosphate. The catalysed reaction is D-allose 6-phosphate = D-allulose 6-phosphate. It participates in carbohydrate degradation; pentose phosphate pathway; D-ribose 5-phosphate from D-ribulose 5-phosphate (non-oxidative stage): step 1/1. Inhibited by iodoacetate and glucose 6-phosphate. In terms of biological role, catalyzes the interconversion of ribulose-5-P and ribose-5-P. It probably also has activity on D-allose 6-phosphate. The chain is Ribose-5-phosphate isomerase B from Escherichia coli (strain K12).